The primary structure comprises 638 residues: Zinc finger and BTB domain-containing protein 22 (638 aa).

Residues 57 to 121 (CDVSIRVQGR…AYTGRLSMAA (65 aa)) enclose the BTB domain. Disordered stretches follow at residues 171 to 223 (CASV…STSQ), 229 to 248 (SAAG…APVV), 335 to 354 (DDED…GEPE), and 367 to 451 (EPAD…HGAV). A compositionally biased stretch (polar residues) spans 189–210 (SVRSHTSSRASENQSPSSSNYF). Residue Ser203 is modified to Phosphoserine. The segment at 483–504 (FLCHCGKAFSHKSMRDRHVNMH) adopts a C2H2-type 1; atypical zinc-finger fold. C2H2-type zinc fingers lie at residues 510 to 532 (FDCP…MKTH) and 538 to 559 (YECS…HRGH). The tract at residues 564-638 (HRMGVGGVGS…DFSGGGGAAH (75 aa)) is disordered.

Belongs to the krueppel C2H2-type zinc-finger protein family.

The protein localises to the nucleus. Functionally, may be involved in transcriptional regulation. This is Zinc finger and BTB domain-containing protein 22 (Zbtb22) from Mus musculus (Mouse).